Reading from the N-terminus, the 282-residue chain is Ermin (282 aa).

Composition is skewed to polar residues over residues 1-12 and 21-30; these read MTDTPVTLSGSE and NGQQPSSQTR. The tract at residues 1–71 is disordered; it reads MTDTPVTLSG…NSKGNVLPRG (71 aa). 5 positions are modified to phosphoserine: Ser72, Ser212, Ser224, Ser228, and Ser231. Over residues 212-224 the composition is skewed to basic and acidic residues; that stretch reads SPLKEESLAREDS. The tract at residues 212 to 246 is disordered; sequence SPLKEESLAREDSPLSSPSSQPGTPDEQLVLGKKG. A compositionally biased stretch (polar residues) spans 225 to 234; sequence PLSSPSSQPG. A Phosphothreonine modification is found at Thr235. The segment at 263 to 282 is binds actin; it reads KIRKGNTKQRIDEFESMMHL.

In terms of assembly, binds actin. In terms of tissue distribution, expressed specifically by the oligodendrocytes. Highest expression seen in the spinal cord followed by brainstem, cerebellum, thalamus, and hypothalamus. In the myelin sheath, found mainly in the abaxon and the lateral few terminal loops. Its apposition to the myelinated axon, through the latter, defines an axonal subregion, termed juxtanode, at the Ranvier node-paranode junction.

Its subcellular location is the cytoplasm. The protein localises to the cytoskeleton. Its function is as follows. Plays a role in cytoskeletal rearrangements during the late wrapping and/or compaction phases of myelinogenesis as well as in maintenance and stability of myelin sheath in the adult. May play an important role in late-stage oligodendroglia maturation, myelin/Ranvier node formation during CNS development, and in the maintenance and plasticity of related structures in the mature CNS. This is Ermin (Ermn) from Rattus norvegicus (Rat).